Consider the following 637-residue polypeptide: 1-deoxy-D-xylulose-5-phosphate synthase (637 aa).

Thiamine diphosphate is bound by residues His88 and 129–131 (GHS). Asp160 is a binding site for Mg(2+). Residues 161-162 (GA), Asn189, Phe293, and Glu370 contribute to the thiamine diphosphate site. Asn189 is a Mg(2+) binding site.

The protein belongs to the transketolase family. DXPS subfamily. Homodimer. Requires Mg(2+) as cofactor. Thiamine diphosphate is required as a cofactor.

The catalysed reaction is D-glyceraldehyde 3-phosphate + pyruvate + H(+) = 1-deoxy-D-xylulose 5-phosphate + CO2. Its pathway is metabolic intermediate biosynthesis; 1-deoxy-D-xylulose 5-phosphate biosynthesis; 1-deoxy-D-xylulose 5-phosphate from D-glyceraldehyde 3-phosphate and pyruvate: step 1/1. Functionally, catalyzes the acyloin condensation reaction between C atoms 2 and 3 of pyruvate and glyceraldehyde 3-phosphate to yield 1-deoxy-D-xylulose-5-phosphate (DXP). This is 1-deoxy-D-xylulose-5-phosphate synthase from Acinetobacter baumannii (strain AYE).